A 493-amino-acid chain; its full sequence is Protein nucleotidyltransferase YdiU (493 aa).

G81, G83, R84, K103, D115, G116, R166, and R173 together coordinate ATP. D244 (proton acceptor) is an active-site residue. Mg(2+) contacts are provided by N245 and D254. D254 lines the ATP pocket.

It belongs to the SELO family. The cofactor is Mg(2+). It depends on Mn(2+) as a cofactor.

It catalyses the reaction L-seryl-[protein] + ATP = 3-O-(5'-adenylyl)-L-seryl-[protein] + diphosphate. The catalysed reaction is L-threonyl-[protein] + ATP = 3-O-(5'-adenylyl)-L-threonyl-[protein] + diphosphate. The enzyme catalyses L-tyrosyl-[protein] + ATP = O-(5'-adenylyl)-L-tyrosyl-[protein] + diphosphate. It carries out the reaction L-histidyl-[protein] + UTP = N(tele)-(5'-uridylyl)-L-histidyl-[protein] + diphosphate. It catalyses the reaction L-seryl-[protein] + UTP = O-(5'-uridylyl)-L-seryl-[protein] + diphosphate. The catalysed reaction is L-tyrosyl-[protein] + UTP = O-(5'-uridylyl)-L-tyrosyl-[protein] + diphosphate. In terms of biological role, nucleotidyltransferase involved in the post-translational modification of proteins. It can catalyze the addition of adenosine monophosphate (AMP) or uridine monophosphate (UMP) to a protein, resulting in modifications known as AMPylation and UMPylation. In Shewanella frigidimarina (strain NCIMB 400), this protein is Protein nucleotidyltransferase YdiU.